The sequence spans 185 residues: Probable host range protein 2 (185 aa).

It belongs to the poxviridae C7 protein family.

Plays a role for multiplication of the virus in different cell types. In Swinepox virus (strain Kasza) (SWPV), this protein is Probable host range protein 2.